Reading from the N-terminus, the 452-residue chain is Probable V-type proton ATPase subunit H (452 aa).

Belongs to the V-ATPase H subunit family. As to quaternary structure, V-ATPase is a heteromultimeric enzyme composed of a peripheral catalytic V1 complex (components A to H) attached to an integral membrane V0 proton pore complex (components: a, c, c', c'' and d).

Subunit of the peripheral V1 complex of vacuolar ATPase. Subunit H activates the ATPase activity of the enzyme and couples ATPase activity to proton flow. Vacuolar ATPase is responsible for acidifying a variety of intracellular compartments in eukaryotic cells, thus providing most of the energy required for transport processes in the vacuolar system. This Oryza sativa subsp. japonica (Rice) protein is Probable V-type proton ATPase subunit H.